A 177-amino-acid chain; its full sequence is Parathyroid hormone-related protein (177 aa).

Residues 1–24 (MQRRLVQQWSVAVFLLSYAVPSCG) form the signal peptide. Positions 25–34 (RSVEGLSRRL) are excised as a propeptide. Positions 57–68 (RFFLHHLIAEIH) are important for receptor binding. The segment at 74-177 (ATSEVSPNSK…TSLELDSRRH (104 aa)) is disordered. Over residues 76-90 (SEVSPNSKPSPNTKN) the composition is skewed to polar residues. Positions 108 to 129 (TNKVETYKEQPLKTPGKKKKGK) match the Nuclear localization signal motif. Basic and acidic residues predominate over residues 109 to 118 (NKVETYKEQP). The span at 122-132 (PGKKKKGKPGK) shows a compositional bias: basic residues.

It belongs to the parathyroid hormone family. In terms of assembly, interacts with PTH1R (via N-terminal extracellular domain). There are 3 principal secretory forms, called PTHrP[1-36], PTHrP[38-94], and osteostatin (PTHrP[107-139]) arising from endoproteolytic cleavage of the initial translation product. Each of these secretory forms is believed to have one or more of its own receptors that mediates the normal paracrine, autocrine and endocrine actions. In terms of tissue distribution, ubiquitous. Also expressed in the mammary gland.

The protein resides in the secreted. The protein localises to the cytoplasm. Its subcellular location is the nucleus. Neuroendocrine peptide which is a critical regulator of cellular and organ growth, development, migration, differentiation and survival and of epithelial calcium ion transport. Acts by binding to its receptor, PTH1R, activating G protein-coupled receptor signaling. Regulates endochondral bone development and epithelial-mesenchymal interactions during the formation of the mammary glands and teeth. Required for skeletal homeostasis. Promotes mammary mesenchyme differentiation and bud outgrowth by modulating mesenchymal cell responsiveness to BMPs. Up-regulates BMPR1A expression in the mammary mesenchyme and this increases the sensitivity of these cells to BMPs and allows them to respond to BMP4 in a paracrine and/or autocrine fashion. BMP4 signaling in the mesenchyme, in turn, triggers epithelial outgrowth and augments MSX2 expression, which causes the mammary mesenchyme to inhibit hair follicle formation within the nipple sheath. Promotes colon cancer cell migration and invasion in an integrin alpha-6/beta-1-dependent manner through activation of Rac1. Its function is as follows. Potent inhibitor of osteoclastic bone resorption. This is Parathyroid hormone-related protein from Homo sapiens (Human).